Consider the following 506-residue polypeptide: MNTMTLTPGQLSLSQLYDVWRHPVQLRLDASAIDGINASVACVNDIVAEGRTAYGINTGFGLLAQTRIADEDLQNLQRSLVLSHAAGVGDPLDDAMVRLIMVLKINSLARGFSGIRLSVIEALIALVNAGVYPLIPAKGSVGASGDLAPLAHLSLTLLGEGKARWQGEWLPAQTALKKAGLEPVALAAKEGLALLNGTQASTAFALRGLFEAQELFASAVVCGALTTEAVLGSRRPFDARIHAARGQQGQIDVARLFRHLLTDTSAIAESHHHCHKVQDPYSLRCQPQVMGACLTQLRQTKEVLLAEANAVSDNPLVFADAGEVISGGNFHAEPVAMAADNLALAIAEIGALSERRIALMMDKHMSQLPPFLVKNGGVNSGFMIAQVTAAALASENKALAHPHSVDSLPTSANQEDHVSMAPAAGRRLWEMAANTRGIIAVEWLAACQGIDLREGLTSSPLLEQARQTLRERVAHYTQDRFFAPDIECATALLAQGALQRLVPDFM.

The 5-imidazolinone (Ala-Gly) cross-link spans 143-145; that stretch reads ASG. 2,3-didehydroalanine (Ser) is present on Ser144.

The protein belongs to the PAL/histidase family. Contains an active site 4-methylidene-imidazol-5-one (MIO), which is formed autocatalytically by cyclization and dehydration of residues Ala-Ser-Gly.

Its subcellular location is the cytoplasm. The catalysed reaction is L-histidine = trans-urocanate + NH4(+). The protein operates within amino-acid degradation; L-histidine degradation into L-glutamate; N-formimidoyl-L-glutamate from L-histidine: step 1/3. This is Histidine ammonia-lyase from Salmonella paratyphi C (strain RKS4594).